The sequence spans 255 residues: EEF1A lysine methyltransferase 4 (255 aa).

Trp-26 and Tyr-30 together coordinate S-adenosyl-L-methionine. Position 39 is a phosphotyrosine (Tyr-39). S-adenosyl-L-methionine-binding positions include Trp-41, Gly-66, Asp-88–Tyr-89, Asp-113–Val-114, and Lys-130. The Required for methyltransferase activity signature appears at Glu-129–Asp-134.

The protein belongs to the methyltransferase superfamily.

It catalyses the reaction L-lysyl-[protein] + S-adenosyl-L-methionine = N(6)-methyl-L-lysyl-[protein] + S-adenosyl-L-homocysteine + H(+). The catalysed reaction is N(6)-methyl-L-lysyl-[protein] + S-adenosyl-L-methionine = N(6),N(6)-dimethyl-L-lysyl-[protein] + S-adenosyl-L-homocysteine + H(+). It carries out the reaction N(6),N(6)-dimethyl-L-lysyl-[protein] + S-adenosyl-L-methionine = N(6),N(6),N(6)-trimethyl-L-lysyl-[protein] + S-adenosyl-L-homocysteine + H(+). Protein-lysine methyltransferase that efficiently catalyzes three successive methylations on 'Lys-36' in eukaryotic translation elongation factor 1 alpha (EEF1A1 or EEF1A2). This is EEF1A lysine methyltransferase 4 from Mus musculus (Mouse).